Consider the following 350-residue polypeptide: Twinfilin-1 (350 aa).

ADF-H domains lie at 4-139 and 177-313; these read QTGI…KYLA and GIAF…EEVH. The interval 316-350 is disordered; sequence QHAHKQNFAKPKGPAGKRGIRRLIRGPAEAETAND.

It belongs to the actin-binding proteins ADF family. Twinfilin subfamily. As to quaternary structure, interacts with G-actin; ADP-actin form.

Its subcellular location is the cytoplasm. The protein resides in the cytoskeleton. Actin-binding protein involved in motile and morphological processes. Inhibits actin polymerization, likely by sequestering G-actin. The protein is Twinfilin-1 (twf1) of Xenopus tropicalis (Western clawed frog).